An 86-amino-acid chain; its full sequence is Small ribosomal subunit protein uS15 (86 aa).

A disordered region spans residues 1–22 (MSVDTQKVIEDNKRSAQDTGSP). A compositionally biased stretch (basic and acidic residues) spans 7–16 (KVIEDNKRSA).

This sequence belongs to the universal ribosomal protein uS15 family. Part of the 30S ribosomal subunit. Forms a bridge to the 50S subunit in the 70S ribosome, contacting the 23S rRNA.

In terms of biological role, one of the primary rRNA binding proteins, it binds directly to 16S rRNA where it helps nucleate assembly of the platform of the 30S subunit by binding and bridging several RNA helices of the 16S rRNA. Forms an intersubunit bridge (bridge B4) with the 23S rRNA of the 50S subunit in the ribosome. This Xanthomonas axonopodis pv. citri (strain 306) protein is Small ribosomal subunit protein uS15.